We begin with the raw amino-acid sequence, 94 residues long: TTEEVPLNPEPRTECDSDNCAAGERPYAPNIAIENGDTIIAIGVVADVMFVIDXNCPLYCNFCIVADVMFVIDLVYEVGSFEALQQAIDNIMFT.

Homodimer. As to expression, ubiquitous (at protein level). Highest levels of expression in crystalline style followed by digestive gland and mantle.

Strongly inhibited by the serine proteinase inhibitor AEBSF. Weakly inhibited by the proteinase inhibitors BSF and aprotinin, and by EDTA. Not inhibited by the proteinase inhibitors bestatin, E-64 and leupeptin. In terms of biological role, hydrolysis of sulfocarbamoyl esters of paralytic shellfish toxins. Does not hydrolyze the carbamoyl esters of paralytic shellfish toxins. Ester hydrolysis is significantly affected by the stereochemistry of sulfate esters at C-11 of the substrate toxin. The polypeptide is Sulfocarbamoylase-1 (Megangulus venulosus (Japanese bivalve)).